The primary structure comprises 448 residues: MKSCEVNFDGLVGPTHNYGGLSYGNVASQSNSQQCSNPREAALQGLAKMKALMDMGFTQGVLAPQERPDVASLRQLGFTGSDEQVIEKAARQDMPLLVASCSASSMWVANAATVSPSADTADGRVHFTAANLNCKYHRSIEHPTTSRVLGAMFADAKHFAHHPALPSVAQFGDEGAANHTRFCQDYGQAGVEFFVFGRSAFDTRYAAPQKYPARQTLEASRAVARLHGLSDECVVYGQQNPAVIDQGVFHNDVIAVGNGEVLFYHEDAFLHTEQMLGELRDKLSRAGGQLQAVCVPRAEVSVQDAVRSYLFNSQLLSRPDGSMLLIVPQECQANANVWGYLQRLIADAGPVAEVKVFDLKQSMQNGGGPACLRLRVALNETELAAVNPGVIMTAPLYETLTQWVDRHYRDRMSENDLADPRLLTECRTALDELTQILKLGAVYPFQLN.

Residues 19–28 (GGLSYGNVAS), Asn110, and 137–138 (HR) each bind substrate. Glu174 is a catalytic residue. A substrate-binding site is contributed by Arg214. Residue His250 is part of the active site. Residues Asp252 and Asn365 each contribute to the substrate site. Catalysis depends on Cys371, which acts as the Nucleophile.

Belongs to the succinylarginine dihydrolase family. Homodimer.

It carries out the reaction N(2)-succinyl-L-arginine + 2 H2O + 2 H(+) = N(2)-succinyl-L-ornithine + 2 NH4(+) + CO2. It functions in the pathway amino-acid degradation; L-arginine degradation via AST pathway; L-glutamate and succinate from L-arginine: step 2/5. Catalyzes the hydrolysis of N(2)-succinylarginine into N(2)-succinylornithine, ammonia and CO(2). This chain is N-succinylarginine dihydrolase, found in Pseudomonas syringae pv. tomato (strain ATCC BAA-871 / DC3000).